Here is a 62-residue protein sequence, read N- to C-terminus: Conotoxin TeAr151 (62 aa).

A signal peptide spans 1–22 (MRCLPVFVVLLLLIASAPSVDA). Positions 23–47 (QPKTKDDVPLAPLHDNIQNTLQTLR) are excised as a propeptide. Met55 bears the Methionine sulfoxide; partial mark. Ser60 carries the serine amide modification.

Belongs to the conotoxin T superfamily. Contains 2 disulfide bonds. In terms of processing, contains 2 disulfide bonds that can be either 'C1-C3, C2-C4' or 'C1-C4, C2-C3', since these disulfide connectivities have been observed for conotoxins with cysteine framework V (for examples, see AC P0DQQ7 and AC P81755).. Expressed by the venom duct. Is mostly present in part 5 of the venom duct (distal part near the pharynx), and less abundantly present in part 4 of the venom duct.

The protein resides in the secreted. The sequence is that of Conotoxin TeAr151 from Conus textile (Cloth-of-gold cone).